Consider the following 765-residue polypeptide: Palmitoyltransferase ZDHHC8 (765 aa).

The Cytoplasmic segment spans residues 1 to 13 (MPRSPGTRLKPAK). A helical membrane pass occupies residues 14-34 (YIPVATAAALLVGSSTLFFVF). Over 35-52 (TCPWLTRAVSPAVPVYNG) the chain is Lumenal. A helical membrane pass occupies residues 53–73 (IIFLFVLANFSMATFMDPGVF). Residues 74 to 148 (PRADEDEDKE…NCIGRRNYRY (75 aa)) lie on the Cytoplasmic side of the membrane. In terms of domain architecture, DHHC spans 104-154 (KWCATCHFYRPPRCSHCSVCDNCVEDFDHHCPWVNNCIGRRNYRYFFLFLL). The active-site S-palmitoyl cysteine intermediate is the C134. The helical transmembrane segment at 149 to 169 (FFLFLLSLSAHMVGVVAFGLV) threads the bilayer. Residues 170-190 (YVLNHAEGLGAAHTTITMAVM) are Lumenal-facing. The helical transmembrane segment at 191–211 (CVAGLFFIPVIGLTGFHVVLV) threads the bilayer. At 212 to 765 (TRGRTTNEQV…VGGTTYEISV (554 aa)) the chain is on the cytoplasmic side. The segment at 293–352 (GLGRSKSKGSLDRLDEKPLDLGPPLPPKIEAGTFSSDLQTPRPGSAESALSVQRTSPPTP) is disordered. A compositionally biased stretch (basic and acidic residues) spans 301–311 (GSLDRLDEKPL). S337 carries the post-translational modification Phosphoserine. An Omega-N-methylarginine modification is found at R441. Positions 509 to 540 (LHPGATGDPPRPLPRSFSPVLGPRPREPSPVR) are disordered. Phosphoserine occurs at positions 606, 627, 675, 682, 725, and 743. Residues 613 to 747 (GPGFGGARNP…PGPSASPTRH (135 aa)) form a disordered region. Residues 622-653 (PALQTSLSSLSSSVSRAPRTSSSSLQADQASS) show a composition bias toward low complexity.

Belongs to the DHHC palmitoyltransferase family. ERF2/ZDHHC9 subfamily. Widely expressed.

The protein localises to the golgi apparatus membrane. It localises to the mitochondrion membrane. It carries out the reaction L-cysteinyl-[protein] + hexadecanoyl-CoA = S-hexadecanoyl-L-cysteinyl-[protein] + CoA. Its function is as follows. Palmitoyltransferase that catalyzes the addition of palmitate onto various protein substrates and therefore functions in several unrelated biological processes. Through the palmitoylation of ABCA1 regulates the localization of the transporter to the plasma membrane and thereby regulates its function in cholesterol and phospholipid efflux. Could also pamitoylate the D(2) dopamine receptor DRD2 and regulate its stability and localization to the plasma membrane. Could also play a role in glutamatergic transmission. In terms of biological role, (Microbial infection) Able to palmitoylate SARS coronavirus-2/SARS-CoV-2 spike protein following its synthesis in the endoplasmic reticulum (ER). In the infected cell, promotes spike biogenesis by protecting it from premature ER degradation, increases half-life and controls the lipid organization of its immediate membrane environment. Once the virus has formed, spike palmitoylation controls fusion with the target cell. The protein is Palmitoyltransferase ZDHHC8 of Homo sapiens (Human).